The sequence spans 266 residues: Isoprenyl transferase (266 aa).

Residue Asp36 is part of the active site. Asp36 contributes to the Mg(2+) binding site. Residues 37–40 (GNGR), Trp41, Arg49, His53, and 81–83 (STE) each bind substrate. Asn84 acts as the Proton acceptor in catalysis. Residues Trp85, Arg87, Arg204, and 210-212 (RIS) each bind substrate. Glu223 is a binding site for Mg(2+).

It belongs to the UPP synthase family. Homodimer. It depends on Mg(2+) as a cofactor.

Catalyzes the condensation of isopentenyl diphosphate (IPP) with allylic pyrophosphates generating different type of terpenoids. The sequence is that of Isoprenyl transferase from Prochlorococcus marinus (strain SARG / CCMP1375 / SS120).